We begin with the raw amino-acid sequence, 124 residues long: RNA polymerase-binding protein RbpA (124 aa).

4 residues coordinate Zn(2+): cysteine 34, histidine 38, cysteine 56, and cysteine 59. Residues 73–124 (EKKAKPARTHWDMLMERRTREELEEVLEERLAVLRSGAMNIAVHPRDSRKSA) form a sufficient for interaction with HrdB (SigA) region.

This sequence belongs to the RNA polymerase-binding protein RbpA family. In terms of assembly, homodimer. Forms a complex with the RNAP, and a complex with RNAP plus principal sigma factor HrdB associated with promoter. Binds to free principal sigma factors HrdB and HrdA, probably via the sigma-2 domain, but not to 6 other sigma factors tested. The cofactor is Zn(2+).

Binds to RNA polymerase (RNAP), stimulating transcription from principal, but not alternative sigma factor promoters. Stimulates transcription from several principal sigma factor HrdB (SigA)-dependent promoters but not from a SigR-dependent promoter. Stimulation occurs in the presence of the transcription initiation inhibitor rifampicin (Rif). The polypeptide is RNA polymerase-binding protein RbpA (Streptomyces coelicolor (strain ATCC BAA-471 / A3(2) / M145)).